We begin with the raw amino-acid sequence, 70 residues long: Cold shock-like protein CspH (70 aa).

A CSD domain is found at 7–67 (GIVKTFDCKS…GLRGPTAANV (61 aa)).

Its subcellular location is the cytoplasm. This Salmonella typhi protein is Cold shock-like protein CspH (cspH).